We begin with the raw amino-acid sequence, 711 residues long: DNA ligase (711 aa).

Residues 1–29 form a disordered region; the sequence is MSEDAIGQQVPAAQEAAAGAEPNSAARER. Low complexity predominate over residues 12 to 25; that stretch reads AAQEAAAGAEPNSA. NAD(+)-binding positions include 54 to 58, 103 to 104, and glutamate 133; these read DAAFD and SL. The N6-AMP-lysine intermediate role is filled by lysine 135. Positions 156, 197, 313, and 337 each coordinate NAD(+). Zn(2+)-binding residues include cysteine 431, cysteine 434, cysteine 450, and cysteine 456. One can recognise a BRCT domain in the interval 620 to 709; sequence QGPRPLEGVT…PEAARAVARV (90 aa).

It belongs to the NAD-dependent DNA ligase family. LigA subfamily. The cofactor is Mg(2+). Mn(2+) is required as a cofactor.

It catalyses the reaction NAD(+) + (deoxyribonucleotide)n-3'-hydroxyl + 5'-phospho-(deoxyribonucleotide)m = (deoxyribonucleotide)n+m + AMP + beta-nicotinamide D-nucleotide.. Functionally, DNA ligase that catalyzes the formation of phosphodiester linkages between 5'-phosphoryl and 3'-hydroxyl groups in double-stranded DNA using NAD as a coenzyme and as the energy source for the reaction. It is essential for DNA replication and repair of damaged DNA. The sequence is that of DNA ligase from Salinispora tropica (strain ATCC BAA-916 / DSM 44818 / JCM 13857 / NBRC 105044 / CNB-440).